A 182-amino-acid polypeptide reads, in one-letter code: Methionine-R-sulfoxide reductase B2, mitochondrial (182 aa).

The transit peptide at 1 to 20 (MARLLWLLRGLTLGTAPRRA) directs the protein to the mitochondrion. The MsrB domain maps to 51–180 (KSEWQKKLTP…NSVALKFKPR (130 aa)). Positions 90, 93, 146, and 149 each coordinate Zn(2+). The active-site Nucleophile is the C169.

It belongs to the MsrB Met sulfoxide reductase family. In terms of assembly, interacts with DAOA; the interaction is direct. Requires Zn(2+) as cofactor. In terms of tissue distribution, ubiquitous. Detected in retina, ocular ciliary body, skeletal muscle, heart, colon, bone marrow, cerebellum, small intestine, fetal brain, fetal liver, kidney, spinal cord, lung, placenta and prostate.

It is found in the mitochondrion. It catalyses the reaction L-methionyl-[protein] + [thioredoxin]-disulfide + H2O = L-methionyl-(R)-S-oxide-[protein] + [thioredoxin]-dithiol. The catalysed reaction is [thioredoxin]-disulfide + L-methionine + H2O = L-methionine (R)-S-oxide + [thioredoxin]-dithiol. Methionine-sulfoxide reductase that specifically reduces methionine (R)-sulfoxide back to methionine. While in many cases, methionine oxidation is the result of random oxidation following oxidative stress, methionine oxidation is also a post-translational modification that takes place on specific residue. Upon oxidative stress, may play a role in the preservation of mitochondrial integrity by decreasing the intracellular reactive oxygen species build-up through its scavenging role, hence contributing to cell survival and protein maintenance. The sequence is that of Methionine-R-sulfoxide reductase B2, mitochondrial (MSRB2) from Homo sapiens (Human).